The primary structure comprises 434 residues: Cobyrinate a,c-diamide synthase (434 aa).

A GATase cobBQ-type domain is found at 240–430; it reads KAYVAYDSAF…SHFHFSRTRR (191 aa). Catalysis depends on Cys-322, which acts as the Nucleophile.

This sequence belongs to the CobB/CbiA family. It depends on Mg(2+) as a cofactor.

It catalyses the reaction cob(II)yrinate + 2 L-glutamine + 2 ATP + 2 H2O = cob(II)yrinate a,c diamide + 2 L-glutamate + 2 ADP + 2 phosphate + 2 H(+). It participates in cofactor biosynthesis; adenosylcobalamin biosynthesis; cob(II)yrinate a,c-diamide from sirohydrochlorin (anaerobic route): step 10/10. Catalyzes the ATP-dependent amidation of the two carboxylate groups at positions a and c of cobyrinate, using either L-glutamine or ammonia as the nitrogen source. This chain is Cobyrinate a,c-diamide synthase, found in Sulfolobus acidocaldarius (strain ATCC 33909 / DSM 639 / JCM 8929 / NBRC 15157 / NCIMB 11770).